The primary structure comprises 185 residues: Ribosome-recycling factor (185 aa).

It belongs to the RRF family.

Its subcellular location is the cytoplasm. Responsible for the release of ribosomes from messenger RNA at the termination of protein biosynthesis. May increase the efficiency of translation by recycling ribosomes from one round of translation to another. This is Ribosome-recycling factor from Mannheimia succiniciproducens (strain KCTC 0769BP / MBEL55E).